A 1514-amino-acid polypeptide reads, in one-letter code: Mitogen-activated protein kinase-binding protein 1 (1514 aa).

Alanine 2 carries the post-translational modification N-acetylalanine. WD repeat units follow at residues 88 to 129 (SSRK…QVAE), 132 to 173 (EHKY…VVAS), 175 to 213 (KVSS…TSKV), 276 to 315 (DSFT…FLST), 342 to 381 (ARYP…KVGK), 387 to 436 (YHSS…VHGS), 477 to 516 (DPRV…EMLK), 519 to 561 (AHDS…SLQQ), 565 to 606 (EHSS…DGVQ), 614 to 653 (VRKT…QKKL), 659 to 698 (GEDG…CVAT), and 701 to 740 (GHSE…TISM). Disordered stretches follow at residues 748-804 (RQRQ…PALP), 880-925 (PSLQ…SQPC), 951-1256 (EDGI…SSMA), and 1299-1336 (DIPK…GLGK). Over residues 789–800 (KEGEDEGTEEEL) the composition is skewed to acidic residues. Polar residues-rich tracts occupy residues 905-925 (LETS…SQPC) and 961-971 (DNPTMDTSEFQ). Positions 996 to 1011 (DSACSVDYSSSCLSSP) are enriched in low complexity. Positions 1032–1048 (DLEEPAEGDEEEEEEEG) are enriched in acidic residues. Residues 1113 to 1126 (PSPSSSSLALMSRP) are compositionally biased toward low complexity. Polar residues-rich tracts occupy residues 1188–1200 (SPFS…QSVH) and 1245–1256 (HSYQNPTTSSMA). Serine 1198 is subject to Phosphoserine.

As to quaternary structure, can form homodimers (via C-terminus). Interacts (via C-terminus) with WDR62 (via C-terminus). Interacts with MAPK9. Interacts (via N-terminus) with NOD2; the interaction is enhanced in presence of muramyl dipeptide (MDP). Interacts with MAPK10. In terms of tissue distribution, expressed in intestinal mucosa, where it is detected in epithelial cells, endothelial cells, smooth muscle cells and immune cells, such as lymphocytes. Expressed in kidney.

The protein resides in the cytoplasm. It localises to the nucleus. The protein localises to the cytoskeleton. It is found in the spindle pole. In terms of biological role, negative regulator of NOD2 function. It down-regulates NOD2-induced processes such as activation of NF-kappa-B signaling, IL8 secretion and antibacterial response. Involved in JNK signaling pathway. This Homo sapiens (Human) protein is Mitogen-activated protein kinase-binding protein 1 (MAPKBP1).